Here is a 981-residue protein sequence, read N- to C-terminus: Ubiquitin carboxyl-terminal hydrolase 15 (981 aa).

Ala-2 carries the post-translational modification N-acetylalanine. The tract at residues 2–223 (AEGGAADLDT…KNEDGTWPRG (222 aa)) is mediates interaction with SART3. The DUSP domain maps to 7–118 (ADLDTQRSDI…GQEPIARKVV (112 aa)). A disordered region spans residues 216 to 237 (EDGTWPRGPSTPKSPGASNFST). Position 226 is a phosphothreonine (Thr-226). Polar residues predominate over residues 226 to 237 (TPKSPGASNFST). Residues Ser-229 and Ser-242 each carry the phosphoserine modification. The USP domain maps to 289 to 933 (CGLSNLGNTC…AAYVLFYQRQ (645 aa)). Cys-298 serves as the catalytic Nucleophile. A Phosphothreonine modification is found at Thr-602. The disordered stretch occupies residues 633 to 694 (CCEDQNINGN…GGDNDSENGL (62 aa)). The span at 656–673 (METDEPDDESSQDQELPS) shows a compositional bias: acidic residues. The active-site Proton acceptor is the His-891. Residues 952–981 (SAATGIPLESDEDSNDNDNDLENENCMHTN) are disordered. A compositionally biased stretch (acidic residues) spans 960–974 (ESDEDSNDNDNDLEN). Phosphoserine is present on residues Ser-961 and Ser-965.

The protein belongs to the peptidase C19 family. A homodimer structure has been reported; however it is unclear whether the protein form a homodimer in vivo. Identified in a complex with the COP9 signalosome complex (CSN). Interacts with SMAD1, SMAD2 and SMAD3; the interaction is direct. Forms a complex with SMURF2 and SMAD7. Interacts with TGFBR1. Interacts with SART3; the interaction is direct. May interact with RNF20 and RNF40. May interact with PRKN. Interacts with INCA1. In terms of processing, phosphorylated. Phosphorylation protects against ubiquitination and subsequent degradation by the proteasome. Ubiquitinated, leading to degradation by the proteasome. In terms of tissue distribution, widely expressed with highest levels in the brain and spleen, and lowest levels in the muscles (at protein level). In the midbrain, strong expression in neurons including the dopaminergic neurons (at protein level). Widely expressed with highest levels in testis, heart and liver.

Its subcellular location is the cytoplasm. The protein resides in the nucleus. It localises to the mitochondrion. The catalysed reaction is Thiol-dependent hydrolysis of ester, thioester, amide, peptide and isopeptide bonds formed by the C-terminal Gly of ubiquitin (a 76-residue protein attached to proteins as an intracellular targeting signal).. In terms of biological role, hydrolase that removes conjugated ubiquitin from target proteins and regulates various pathways such as the TGF-beta receptor signaling, NF-kappa-B and RNF41/NRDP1-PRKN pathways. Acts as a key regulator of TGF-beta receptor signaling pathway, but the precise mechanism is still unclear: according to a report, acts by promoting deubiquitination of monoubiquitinated R-SMADs (SMAD1, SMAD2 and/or SMAD3), thereby alleviating inhibition of R-SMADs and promoting activation of TGF-beta target genes. According to another reports, regulates the TGF-beta receptor signaling pathway by mediating deubiquitination and stabilization of TGFBR1, leading to an enhanced TGF-beta signal. Able to mediate deubiquitination of monoubiquitinated substrates, 'Lys-27'-, 'Lys-48'- and 'Lys-63'-linked polyubiquitin chains. May also regulate gene expression and/or DNA repair through the deubiquitination of histone H2B. Acts as an inhibitor of mitophagy by counteracting the action of parkin (PRKN): hydrolyzes cleavage of 'Lys-48'- and 'Lys-63'-linked polyubiquitin chains attached by parkin on target proteins such as MFN2, thereby reducing parkin's ability to drive mitophagy. Acts as an associated component of COP9 signalosome complex (CSN) and regulates different pathways via this association: regulates NF-kappa-B by mediating deubiquitination of NFKBIA and deubiquitinates substrates bound to VCP. Involved in endosome organization by mediating deubiquitination of SQSTM1: ubiquitinated SQSTM1 forms a molecular bridge that restrains cognate vesicles in the perinuclear region and its deubiquitination releases target vesicles for fast transport into the cell periphery. Acts as a negative regulator of antifungal immunity by mediating 'Lys-27'-linked deubiquitination of CARD9, thereby inactivating CARD9. This Mus musculus (Mouse) protein is Ubiquitin carboxyl-terminal hydrolase 15 (Usp15).